The following is a 65-amino-acid chain: MARTNKLLTPGVEQFLDQYKYEIAQEFGVTLGSDTAARSNGSVGGEITKRLVQQAQAHLSGSTQK.

Belongs to the alpha/beta-type SASP family.

Functionally, SASP are bound to spore DNA. They are double-stranded DNA-binding proteins that cause DNA to change to an a-like conformation. They protect the DNA backbone from chemical and enzymatic cleavage and are thus involved in dormant spore's high resistance to UV light. This Priestia megaterium (Bacillus megaterium) protein is Small, acid-soluble spore protein C3 (SASP-C3).